We begin with the raw amino-acid sequence, 393 residues long: Argininosuccinate synthase (393 aa).

ATP contacts are provided by residues 7–15 (AYSGGLDTS) and Ala-34. L-citrulline-binding residues include Tyr-85 and Ser-90. Gly-115 contributes to the ATP binding site. The L-aspartate site is built by Thr-117, Asn-121, and Asp-122. Asn-121 lines the L-citrulline pocket. 5 residues coordinate L-citrulline: Arg-125, Ser-176, Ser-185, Glu-261, and Tyr-273.

This sequence belongs to the argininosuccinate synthase family. Type 1 subfamily. In terms of assembly, homotetramer.

Its subcellular location is the cytoplasm. It carries out the reaction L-citrulline + L-aspartate + ATP = 2-(N(omega)-L-arginino)succinate + AMP + diphosphate + H(+). It participates in amino-acid biosynthesis; L-arginine biosynthesis; L-arginine from L-ornithine and carbamoyl phosphate: step 2/3. The polypeptide is Argininosuccinate synthase (Ehrlichia chaffeensis (strain ATCC CRL-10679 / Arkansas)).